A 453-amino-acid chain; its full sequence is MENEEWKVSVWICQEEKLVSGLTRRTTCADVVRVLLADHNEKQAEEGSMLMGEEGSMLLGPPQCYCIVEKWRGFERILPNKTKILRLWTAWGEEQDNVKFVLVRSEASLPNIGPRSAEAKVVLSKESPCHQRTLSKTSTGPTQDKQRRVVRKAFRKLAKINRKRHETLPKESSSVEKMETLVHLVLSQDHTIRQQVQRIMELDREIERFEARTHFDRMKMHGVNYVQETYLVGTVSEKGSASDSNPPSDQSSQEELFADYAQKCDEVLLLQEQISRQEEAMEQMTVQIQEELNKRWMERRQEELSSKEQESSLSDSGADQGGDESQLLLEQEQVKTELSASLYIGLRLNTDLEAIKADLDYTQKMWDDKEQELQSLLHSLNDLETSGCQDLAEISCEDTSLGVTTTGSPTDSWVEKDLGRPTNCEANDEDSDTGLSSMHSQDSDSGPVCESLV.

One can recognise a Ras-associating domain in the interval 1 to 107 (MENEEWKVSV…VKFVLVRSEA (107 aa)). A coiled-coil region spans residues 262–295 (QKCDEVLLLQEQISRQEEAMEQMTVQIQEELNKR). The segment covering 299 to 310 (RRQEELSSKEQE) has biased composition (basic and acidic residues). Disordered regions lie at residues 299 to 322 (RRQE…DQGG) and 402 to 453 (GVTT…ESLV). Polar residues-rich tracts occupy residues 402-411 (GVTTTGSPTD) and 433-444 (TGLSSMHSQDSD).

Its subcellular location is the cytoplasm. The protein localises to the cytosol. It localises to the cytoskeleton. The protein resides in the microtubule organizing center. It is found in the centrosome. Its subcellular location is the spindle pole. Its function is as follows. May play role in regulating embryonic neurogenesis. This chain is Ras association domain-containing protein 10 (rassf10), found in Xenopus laevis (African clawed frog).